The primary structure comprises 289 residues: Energy-coupling factor transporter ATP-binding protein EcfA2 (289 aa).

One can recognise an ABC transporter domain in the interval 3–246; sequence IRFKQVDFTY…TQWLKEKQLG (244 aa). Position 40-47 (40-47) interacts with ATP; that stretch reads GHTGSGKS.

This sequence belongs to the ABC transporter superfamily. Energy-coupling factor EcfA family. As to quaternary structure, forms a stable energy-coupling factor (ECF) transporter complex composed of 2 membrane-embedded substrate-binding proteins (S component), 2 ATP-binding proteins (A component) and 2 transmembrane proteins (T component).

Its subcellular location is the cell membrane. In terms of biological role, ATP-binding (A) component of a common energy-coupling factor (ECF) ABC-transporter complex. Unlike classic ABC transporters this ECF transporter provides the energy necessary to transport a number of different substrates. The polypeptide is Energy-coupling factor transporter ATP-binding protein EcfA2 (Enterococcus faecalis (strain ATCC 700802 / V583)).